Reading from the N-terminus, the 153-residue chain is Hydrogenase expression/formation protein HoxT (153 aa).

The protein belongs to the HupJ family.

This chain is Hydrogenase expression/formation protein HoxT (hoxT), found in Azotobacter vinelandii.